The chain runs to 608 residues: Phosphogluconate dehydratase (608 aa).

[4Fe-4S] cluster-binding residues include Cys-154 and Cys-221.

It belongs to the IlvD/Edd family. [4Fe-4S] cluster serves as cofactor.

The enzyme catalyses 6-phospho-D-gluconate = 2-dehydro-3-deoxy-6-phospho-D-gluconate + H2O. It functions in the pathway carbohydrate metabolism; Entner-Doudoroff pathway. Functionally, catalyzes the dehydration of 6-phospho-D-gluconate to 2-dehydro-3-deoxy-6-phospho-D-gluconate. The polypeptide is Phosphogluconate dehydratase (Helicobacter pylori (strain J99 / ATCC 700824) (Campylobacter pylori J99)).